The following is a 181-amino-acid chain: Dual-action ribosomal maturation protein DarP (181 aa).

Residues 1 to 23 form a disordered region; sequence MTGIKKPMSQYQDDNELEDWGPS.

Belongs to the DarP family.

It is found in the cytoplasm. Its function is as follows. Member of a network of 50S ribosomal subunit biogenesis factors which assembles along the 30S-50S interface, preventing incorrect 23S rRNA structures from forming. Promotes peptidyl transferase center (PTC) maturation. In Aeromonas salmonicida (strain A449), this protein is Dual-action ribosomal maturation protein DarP.